The sequence spans 152 residues: Large ribosomal subunit protein bL9 (152 aa).

Belongs to the bacterial ribosomal protein bL9 family.

In terms of biological role, binds to the 23S rRNA. The sequence is that of Large ribosomal subunit protein bL9 from Mycobacterium ulcerans (strain Agy99).